Here is a 370-residue protein sequence, read N- to C-terminus: WAT1-related protein At1g44800 (370 aa).

A run of 10 helical transmembrane segments spans residues 11-31 (PILAIISLQFGYAGMYIITMV), 41-61 (VLATYRHVVATVVMAPFALMF), 67-87 (PKMTLAIFWRLLALGILEPLM), 102-122 (SYTSAFTNALPAVTFILALIF), 142-162 (VITVGGAMIMTLYKGPAIEIV), 182-202 (WVLGTIAIMGSISTWAAFFIL), 216-236 (LVTLICGIGTILNAIASLIMV), 252-272 (AAVYSGVVCSGIAYYIQSIVI), 278-298 (VFTTSFSPMCMIITAFLGALV), and 303-323 (IHLGSIIGAVFIVLGLYSVVW). 2 consecutive EamA domains span residues 23-143 (AGMY…GTVI) and 195-322 (TWAA…YSVV).

The protein belongs to the drug/metabolite transporter (DMT) superfamily. Plant drug/metabolite exporter (P-DME) (TC 2.A.7.4) family.

Its subcellular location is the membrane. The polypeptide is WAT1-related protein At1g44800 (Arabidopsis thaliana (Mouse-ear cress)).